We begin with the raw amino-acid sequence, 156 residues long: Probable cyclic pyranopterin monophosphate synthase (156 aa).

Substrate-binding positions include 74–76 (MCH) and 110–111 (ME). Asp-125 is a catalytic residue.

It belongs to the MoaC family. As to quaternary structure, homohexamer; trimer of dimers.

The catalysed reaction is (8S)-3',8-cyclo-7,8-dihydroguanosine 5'-triphosphate = cyclic pyranopterin phosphate + diphosphate. The protein operates within cofactor biosynthesis; molybdopterin biosynthesis. Functionally, catalyzes the conversion of (8S)-3',8-cyclo-7,8-dihydroguanosine 5'-triphosphate to cyclic pyranopterin monophosphate (cPMP). This Methanospirillum hungatei JF-1 (strain ATCC 27890 / DSM 864 / NBRC 100397 / JF-1) protein is Probable cyclic pyranopterin monophosphate synthase.